We begin with the raw amino-acid sequence, 229 residues long: PKHD-type hydroxylase BBta_1313 (229 aa).

Residues 78–180 (HIFPPLFNRY…RIASFFWLQS (103 aa)) enclose the Fe2OG dioxygenase domain. Fe cation-binding residues include His-98, Asp-100, and His-161. Arg-171 serves as a coordination point for 2-oxoglutarate.

It depends on Fe(2+) as a cofactor. L-ascorbate serves as cofactor.

This is PKHD-type hydroxylase BBta_1313 from Bradyrhizobium sp. (strain BTAi1 / ATCC BAA-1182).